Consider the following 785-residue polypeptide: Mitochondrial intermediate peptidase (785 aa).

The N-terminal 26 residues, 1–26 (MLKVTTSRPWVCSRCVRRQVQSRRRL), are a transit peptide targeting the mitochondrion. The tract at residues 26-51 (LATASTQYRESRPVPVDNSAPGAKRD) is disordered. Histidine 566 is a Zn(2+) binding site. The active site involves glutamate 567. The Zn(2+) site is built by histidine 570 and histidine 573.

The protein belongs to the peptidase M3 family. Requires Zn(2+) as cofactor.

The protein resides in the mitochondrion matrix. The enzyme catalyses Release of an N-terminal octapeptide as second stage of processing of some proteins imported into the mitochondrion.. Cleaves proteins, imported into the mitochondrion, to their mature size. While most mitochondrial precursor proteins are processed to the mature form in one step by mitochondrial processing peptidase (MPP), the sequential cleavage by MIP of an octapeptide after initial processing by MPP is a required step for a subgroup of nuclear-encoded precursor proteins destined for the matrix or the inner membrane. The chain is Mitochondrial intermediate peptidase (oct1) from Botryotinia fuckeliana (strain B05.10) (Noble rot fungus).